Reading from the N-terminus, the 339-residue chain is Adenylosuccinate synthetase (339 aa).

Residues glycine 12–serine 18 and glycine 42–serine 44 each bind GTP. Aspartate 13 acts as the Proton acceptor in catalysis. Aspartate 13 and glycine 42 together coordinate Mg(2+). Residues aspartate 13–lysine 16, asparagine 40–histidine 43, threonine 127, arginine 141, glutamine 179, threonine 194, and arginine 256 contribute to the IMP site. Histidine 43 serves as the catalytic Proton donor. Threonine 252–arginine 258 serves as a coordination point for substrate. Residues arginine 258, methionine 284–aspartate 286, and lysine 324–glycine 326 each bind GTP.

This sequence belongs to the adenylosuccinate synthetase family. Homodimer. Requires Mg(2+) as cofactor.

It is found in the cytoplasm. The enzyme catalyses IMP + L-aspartate + GTP = N(6)-(1,2-dicarboxyethyl)-AMP + GDP + phosphate + 2 H(+). It functions in the pathway purine metabolism; AMP biosynthesis via de novo pathway; AMP from IMP: step 1/2. Its function is as follows. Plays an important role in the de novo pathway of purine nucleotide biosynthesis. Catalyzes the first committed step in the biosynthesis of AMP from IMP. The sequence is that of Adenylosuccinate synthetase from Thermococcus sibiricus (strain DSM 12597 / MM 739).